Reading from the N-terminus, the 518-residue chain is Envelope protein (518 aa).

The first 31 residues, 1–31 (MSVNRSSIKSLLMVFMIVSSSLLAPVGGAAA), serve as a signal peptide directing secretion. The Extracellular portion of the chain corresponds to 32–485 (DEFRTPAASD…IEDREPEAGG (454 aa)). N213 carries N-linked (GlcNAc...) (hybrid) asparagine; by host glycosylation. A helical membrane pass occupies residues 486 to 506 (FFGSGSTDTMLVGLLALAGVL). At 507-518 (LLAQSNNRGGRR) the chain is on the cytoplasmic side.

Post-translationally, N-glycosylated by a pentasaccharide comprising glucose, glucuronic acid and a terminal 5-N-formyl-legionaminic acid residue.

The protein resides in the virion membrane. In terms of biological role, envelope protein that may play a role in host-cell attachment and viral genome entry. This Halorubrum sp. PV6 (HRPV-1) protein is Envelope protein.